Consider the following 498-residue polypeptide: Lysine--tRNA ligase (498 aa).

Mg(2+)-binding residues include glutamate 407 and glutamate 414.

The protein belongs to the class-II aminoacyl-tRNA synthetase family. Homodimer. It depends on Mg(2+) as a cofactor.

Its subcellular location is the cytoplasm. The catalysed reaction is tRNA(Lys) + L-lysine + ATP = L-lysyl-tRNA(Lys) + AMP + diphosphate. In Sinorhizobium medicae (strain WSM419) (Ensifer medicae), this protein is Lysine--tRNA ligase.